Consider the following 88-residue polypeptide: Insertion element ISR1 uncharacterized 10 kDa protein A3 (88 aa).

Belongs to the transposase 8 family.

The sequence is that of Insertion element ISR1 uncharacterized 10 kDa protein A3 from Rhizobium sp.